Consider the following 937-residue polypeptide: C-1-tetrahydrofolate synthase, cytoplasmic (937 aa).

Positions 1 to 309 (MALLLEGTSL…TLLPLKLQTP (309 aa)) are methylenetetrahydrofolate dehydrogenase and cyclohydrolase. Substrate-binding positions include 50 to 54 (YVRMK) and 97 to 99 (VQL). Residues 168-170 (GRS) and S193 each bind NADP(+). 268 to 272 (PGSVG) lines the substrate pocket. The interval 310-937 (VPSDIEIARS…AENGDIVGLS (628 aa)) is formyltetrahydrofolate synthetase. 374-381 (TPFGEGKS) contributes to the ATP binding site.

The protein in the N-terminal section; belongs to the tetrahydrofolate dehydrogenase/cyclohydrolase family. This sequence in the C-terminal section; belongs to the formate--tetrahydrofolate ligase family. In terms of assembly, homodimer.

Its subcellular location is the cytoplasm. It catalyses the reaction (6R)-5,10-methylene-5,6,7,8-tetrahydrofolate + NADP(+) = (6R)-5,10-methenyltetrahydrofolate + NADPH. It carries out the reaction (6R)-5,10-methenyltetrahydrofolate + H2O = (6R)-10-formyltetrahydrofolate + H(+). The enzyme catalyses (6S)-5,6,7,8-tetrahydrofolate + formate + ATP = (6R)-10-formyltetrahydrofolate + ADP + phosphate. It functions in the pathway one-carbon metabolism; tetrahydrofolate interconversion. In Schizosaccharomyces pombe (strain 972 / ATCC 24843) (Fission yeast), this protein is C-1-tetrahydrofolate synthase, cytoplasmic.